The chain runs to 184 residues: ATP synthase subunit b, chloroplastic (184 aa).

Residues 27–49 (LATNPINLSVVFGVLIFFGKGVL) traverse the membrane as a helical segment.

It belongs to the ATPase B chain family. F-type ATPases have 2 components, F(1) - the catalytic core - and F(0) - the membrane proton channel. F(1) has five subunits: alpha(3), beta(3), gamma(1), delta(1), epsilon(1). F(0) has four main subunits: a(1), b(1), b'(1) and c(10-14). The alpha and beta chains form an alternating ring which encloses part of the gamma chain. F(1) is attached to F(0) by a central stalk formed by the gamma and epsilon chains, while a peripheral stalk is formed by the delta, b and b' chains.

The protein resides in the plastid. It localises to the chloroplast thylakoid membrane. In terms of biological role, f(1)F(0) ATP synthase produces ATP from ADP in the presence of a proton or sodium gradient. F-type ATPases consist of two structural domains, F(1) containing the extramembraneous catalytic core and F(0) containing the membrane proton channel, linked together by a central stalk and a peripheral stalk. During catalysis, ATP synthesis in the catalytic domain of F(1) is coupled via a rotary mechanism of the central stalk subunits to proton translocation. Its function is as follows. Component of the F(0) channel, it forms part of the peripheral stalk, linking F(1) to F(0). This Lobularia maritima (Sweet alyssum) protein is ATP synthase subunit b, chloroplastic.